The primary structure comprises 209 residues: Large ribosomal subunit protein uL3 (209 aa).

Residues 141 to 164 (RAVGSMGGSSDPSRTFKSKKMPGH) are disordered.

The protein belongs to the universal ribosomal protein uL3 family. In terms of assembly, part of the 50S ribosomal subunit. Forms a cluster with proteins L14 and L19.

One of the primary rRNA binding proteins, it binds directly near the 3'-end of the 23S rRNA, where it nucleates assembly of the 50S subunit. In Clostridium acetobutylicum (strain ATCC 824 / DSM 792 / JCM 1419 / IAM 19013 / LMG 5710 / NBRC 13948 / NRRL B-527 / VKM B-1787 / 2291 / W), this protein is Large ribosomal subunit protein uL3.